The primary structure comprises 478 residues: Dynein regulatory complex subunit 4 (478 aa).

A compositionally biased stretch (basic residues) spans 1 to 12; that stretch reads MAPKKKGKKGKA. The tract at residues 1-29 is disordered; that stretch reads MAPKKKGKKGKAKGTAIVDGVAPEDMTKE. The segment at 1–114 is regulates microtubule-binding; sequence MAPKKKGKKG…LLYEHQNNLA (114 aa). 2 coiled-coil regions span residues 24–207 and 242–426; these read EDMT…RKTE and LNNL…ELAR. The tract at residues 115-258 is microtubule-binding; sequence EVKAEGTVVM…NSLKEQMEDM (144 aa). Residues 357-478 form an interaction with SMO region; the sequence is QQKTGFKNLL…GPAGLVGAPT (122 aa).

Belongs to the DRC4 family. In terms of assembly, component of the nexin-dynein regulatory complex (N-DRC). Interacts with microtubules. Interacts with SMO. Interacts (via coiled-coil domains) with RAB3B (in GTP-bound form). Interacts with DRC1. Interacts with DRC7. As to expression, highly expressed in adult testes and lung. Weakly or not expressed in other tested tissues.

It localises to the cytoplasm. It is found in the cytoskeleton. The protein localises to the cell projection. Its subcellular location is the cilium. The protein resides in the flagellum. It localises to the cilium axoneme. It is found in the cilium basal body. The protein localises to the golgi apparatus. Its subcellular location is the flagellum axoneme. Its function is as follows. Component of the nexin-dynein regulatory complex (N-DRC), a key regulator of ciliary/flagellar motility which maintains the alignment and integrity of the distal axoneme and regulates microtubule sliding in motile axonemes. Plays an important role in the assembly of the N-DRC linker. Plays dual roles at both the primary (or non-motile) cilia to regulate hedgehog signaling and in motile cilia to coordinate cilia movement. Required for proper motile cilia functioning. Positively regulates ciliary smoothened (SMO)-dependent Hedgehog (Hh) signaling pathway by facilitating the trafficking of SMO into the cilium and the stimulation of SMO activity in a GRK2-dependent manner. May play a role in the spermatozoa motility. This is Dynein regulatory complex subunit 4 (Gas8) from Mus musculus (Mouse).